Reading from the N-terminus, the 502-residue chain is Probable cytosol aminopeptidase (502 aa).

Mn(2+) contacts are provided by Lys-269 and Asp-274. Lys-281 is an active-site residue. 3 residues coordinate Mn(2+): Asp-292, Asp-351, and Glu-353. The active site involves Arg-355.

It belongs to the peptidase M17 family. Mn(2+) serves as cofactor.

It is found in the cytoplasm. The catalysed reaction is Release of an N-terminal amino acid, Xaa-|-Yaa-, in which Xaa is preferably Leu, but may be other amino acids including Pro although not Arg or Lys, and Yaa may be Pro. Amino acid amides and methyl esters are also readily hydrolyzed, but rates on arylamides are exceedingly low.. It carries out the reaction Release of an N-terminal amino acid, preferentially leucine, but not glutamic or aspartic acids.. Its function is as follows. Presumably involved in the processing and regular turnover of intracellular proteins. Catalyzes the removal of unsubstituted N-terminal amino acids from various peptides. This is Probable cytosol aminopeptidase from Photobacterium profundum (strain SS9).